We begin with the raw amino-acid sequence, 150 residues long: uncharacterized protein (150 aa).

A signal peptide spans 1–22 (MVIALKRFSFLASIATLTVLNA). Cys-23 is lipidated: N-palmitoyl cysteine. Cys-23 carries S-diacylglycerol cysteine lipidation.

The protein belongs to the MG067/MG068/MG395 family.

The protein localises to the cell membrane. This is an uncharacterized protein from Mycoplasma pneumoniae (strain ATCC 29342 / M129 / Subtype 1) (Mycoplasmoides pneumoniae).